The following is a 50-amino-acid chain: Toxic protein HokC (50 aa).

The Cytoplasmic portion of the chain corresponds to 1–5 (MKQHK). Residues 6 to 24 (AMIVALIVICITAVVAALV) form a helical; Signal-anchor for type II membrane protein membrane-spanning segment. Residues 25 to 50 (TRKDLCEVHIRTGQTEVAVFTAYESE) lie on the Periplasmic side of the membrane.

The protein belongs to the Hok/Gef family. As to quaternary structure, homodimer; disulfide-linked.

It localises to the cell inner membrane. In terms of biological role, toxic component of a type I toxin-antitoxin (TA) system. When overexpressed kills cells within minutes; causes collapse of the transmembrane potential and arrest of respiration. Its toxic effect is probably neutralized by antisense antitoxin RNA SokC. This chain is Toxic protein HokC, found in Escherichia coli (strain K12).